The following is a 224-amino-acid chain: MEKERDVAQEQATYEQESPNAERQEELKENEHQEKNAPEEQEKVREENGRQDAQKDEIGDPEKAKEEQNEELAAANAKIAELEAKIKEMENRYLRLYADFENFRRRTRREMEAAEKYRAQSLVSDLLPVLDNFERALKIKAEDEQAKSILQGMEMVYRSVLDALKKEGVEAIEAVGKPFDPHLHQAVMQVEDSNYEPNTVVEELQKGYKLKDRVIRPAMVKVSQ.

The interval 1-72 (MEKERDVAQE…KAKEEQNEEL (72 aa)) is disordered. Polar residues predominate over residues 10 to 19 (EQATYEQESP). Basic and acidic residues predominate over residues 20–67 (NAERQEELKENEHQEKNAPEEQEKVREENGRQDAQKDEIGDPEKAKEE).

Belongs to the GrpE family. Homodimer.

It localises to the cytoplasm. Its function is as follows. Participates actively in the response to hyperosmotic and heat shock by preventing the aggregation of stress-denatured proteins, in association with DnaK and GrpE. It is the nucleotide exchange factor for DnaK and may function as a thermosensor. Unfolded proteins bind initially to DnaJ; upon interaction with the DnaJ-bound protein, DnaK hydrolyzes its bound ATP, resulting in the formation of a stable complex. GrpE releases ADP from DnaK; ATP binding to DnaK triggers the release of the substrate protein, thus completing the reaction cycle. Several rounds of ATP-dependent interactions between DnaJ, DnaK and GrpE are required for fully efficient folding. In Parageobacillus thermoglucosidasius (Geobacillus thermoglucosidasius), this protein is Protein GrpE.